Here is a 147-residue protein sequence, read N- to C-terminus: Hemoglobin subunit gamma-1 (147 aa).

Gly-2 carries the post-translational modification N-acetylglycine. The 145-residue stretch at 3-147 (HFTEEDKATI…VASALSSRYH (145 aa)) folds into the Globin domain. Thr-13 carries the post-translational modification Phosphothreonine. 3 positions are modified to phosphoserine: Ser-45, Ser-51, and Ser-53. Residue Lys-60 is modified to N6-acetyllysine. His-64 contributes to the heme b binding site. Lys-83 is subject to N6-acetyllysine. His-93 lines the heme b pocket. S-nitrosocysteine is present on Cys-94. A Phosphoserine modification is found at Ser-140.

Belongs to the globin family. In terms of assembly, heterotetramer of two alpha chains and two gamma chains in fetal hemoglobin (Hb F). Red blood cells.

Gamma chains make up the fetal hemoglobin F, in combination with alpha chains. This chain is Hemoglobin subunit gamma-1 (HBG1), found in Gorilla gorilla gorilla (Western lowland gorilla).